The following is a 415-amino-acid chain: Mitogen-activated protein kinase mpkC (415 aa).

A Protein kinase domain is found at 20–299 (YANLQPVGLG…AEQGLMHPWM (280 aa)). ATP contacts are provided by residues 26 to 34 (VGLGTAGVV) and Lys-49. Residue Asp-141 is the Proton acceptor of the active site. A Phosphothreonine modification is found at Thr-171. The TXY motif lies at 171–173 (TGY). Tyr-173 carries the post-translational modification Phosphotyrosine.

The protein belongs to the protein kinase superfamily. Ser/Thr protein kinase family. MAP kinase subfamily. HOG1 sub-subfamily. The cofactor is Mg(2+). In terms of processing, dually phosphorylated on Thr-171 and Tyr-173, which activates the enzyme.

The catalysed reaction is L-seryl-[protein] + ATP = O-phospho-L-seryl-[protein] + ADP + H(+). It catalyses the reaction L-threonyl-[protein] + ATP = O-phospho-L-threonyl-[protein] + ADP + H(+). With respect to regulation, activated by tyrosine and threonine phosphorylation. Mitogen-activated protein kinase required for growth on media where sorbitol or mannitol is the sole carbon source. The sequence is that of Mitogen-activated protein kinase mpkC (mpkC) from Emericella nidulans (strain FGSC A4 / ATCC 38163 / CBS 112.46 / NRRL 194 / M139) (Aspergillus nidulans).